A 334-amino-acid chain; its full sequence is 4-hydroxyproline 2-epimerase (334 aa).

The active-site Proton acceptor is cysteine 90. Substrate contacts are provided by residues 91 to 92 (GH), histidine 223, and aspartate 249. Cysteine 253 functions as the Proton donor in the catalytic mechanism. 254–255 (GT) provides a ligand contact to substrate.

It belongs to the proline racemase family. As to quaternary structure, homodimer.

It catalyses the reaction trans-4-hydroxy-L-proline = cis-4-hydroxy-D-proline. Its function is as follows. Catalyzes the epimerization of trans-4-hydroxy-L-proline (t4LHyp) to cis-4-hydroxy-D-proline (c4DHyp). Is likely involved in a degradation pathway that converts t4LHyp to alpha-ketoglutarate, which would allow P.denitrificans to grow on t4LHyp as a sole carbon source. Also seems to be involved in an alternative catabolic pathway that degrades trans-4-hydroxy-L-proline betaine (tHyp-B) to alpha-ketoglutarate; this pathway would permit the utilization of tHyp-B as a sole carbon and nitrogen source. In Paracoccus denitrificans (strain Pd 1222), this protein is 4-hydroxyproline 2-epimerase (hypF).